We begin with the raw amino-acid sequence, 380 residues long: cAMP-dependent protein kinase type I-alpha regulatory subunit (380 aa).

Met-1 carries the N-acetylmethionine modification. Ala-2 bears the N-acetylalanine; in cAMP-dependent protein kinase type I-alpha regulatory subunit, N-terminally processed mark. The segment at 2–135 (ASGTTASEEE…ALAKAIEKNV (134 aa)) is dimerization and phosphorylation. Ser-3, Ser-76, and Ser-82 each carry phosphoserine. The interval 64–96 (IQNLQKAGSRADSREDEISPPPPNPVVKGRRRR) is disordered. The Pseudophosphorylation motif signature appears at 95-99 (RRGAI). Position 100 is a phosphoserine (Ser-100). 3',5'-cyclic AMP-binding positions include 136–253 (LFSH…SKVS), Glu-201, Arg-210, 254–380 (ILES…SLSV), Glu-325, and Arg-334. Residue Ser-257 is modified to Phosphoserine.

It belongs to the cAMP-dependent kinase regulatory chain family. In terms of assembly, the inactive holoenzyme is composed of two regulatory chains and two catalytic chains. Activation by cAMP releases the two active catalytic monomers and the regulatory dimer. Interacts with PRKACA and PRKACB. PRKAR1A also interacts with RFC2; the complex may be involved in cell survival. Interacts with AKAP4. Interacts with RARA; the interaction occurs in the presence of cAMP or FSH and regulates RARA transcriptional activity. Interacts with the phosphorylated form of PJA2. Interacts with CBFA2T3. Interacts with PRKX; regulates this cAMP-dependent protein kinase. Interacts with smAKAP; this interaction may target PRKAR1A to the plasma membrane. Interacts with AICDA. Post-translationally, the pseudophosphorylation site binds to the substrate-binding region of the catalytic chain, resulting in the inhibition of its activity. The physiological significance of the in vitro phosphorylation of a proximal serine is unclear. Four types of regulatory chains are found: I-alpha, I-beta, II-alpha, and II-beta. Their expression varies among tissues and is in some cases constitutive and in others inducible.

It is found in the cell membrane. In terms of biological role, regulatory subunit of the cAMP-dependent protein kinases involved in cAMP signaling in cells. The sequence is that of cAMP-dependent protein kinase type I-alpha regulatory subunit (PRKAR1A) from Bos taurus (Bovine).